The sequence spans 333 residues: Serine/threonine-protein phosphatase 4 catalytic subunit 1 (333 aa).

Positions Met-1–Thr-28 are disordered. Residues Asp-7 to Leu-27 show a composition bias toward polar residues. Mn(2+) is bound by residues Asp-79, His-81, Asp-107, and Asn-139. The active-site Proton donor is His-140. Positions 189 and 264 each coordinate Mn(2+). The residue at position 333 (Leu-333) is a Leucine methyl ester.

It belongs to the PPP phosphatase family. PP-4 (PP-X) subfamily. As to quaternary structure, serine/threonine-protein phosphatase 4 (PP4) occurs in different assemblies of the catalytic and one or more regulatory subunits. The regulatory subunits are likely to be ppfr-1, ppfr-2, ppfr-4 and smk-1. Interacts with mei-1. The cofactor is Mn(2+). In terms of processing, methylation at the C-terminal Leu-333 is critical for interactions with regulatory subunits.

The protein localises to the cytoplasm. The protein resides in the cytoskeleton. Its subcellular location is the microtubule organizing center. It localises to the centrosome. The enzyme catalyses O-phospho-L-seryl-[protein] + H2O = L-seryl-[protein] + phosphate. It catalyses the reaction O-phospho-L-threonyl-[protein] + H2O = L-threonyl-[protein] + phosphate. In terms of biological role, protein phosphatase which plays an essential role in meiosis and in early embryonic mitosis. During spermatocyte meiosis and the first embryonic mitosis, regulates centrosome maturation, and thus spindle formation, by recruiting some of the components of the pericentriolar material (PCM). During oocyte meiosis I, regulates meiotic chromosome dynamics including synapsis-independent chromosome pairing, restriction of synapsis to homologous chromosomes, programmed DNA double-strand break initiation and crossover formation resulting in chiasma formation. During oocyte meiosis II and probably together with regulatory subunit ppfr-1, may regulate microtubule severing by dephosphorylating and activating mei-1, a component of the katanin microtubule severing complex. The protein is Serine/threonine-protein phosphatase 4 catalytic subunit 1 of Caenorhabditis elegans.